Here is a 130-residue protein sequence, read N- to C-terminus: UPF0713 protein YngL (130 aa).

3 consecutive transmembrane segments (helical) span residues 4-25 (LSFLTFIMLILASYRLTHLIVF), 62-84 (MLNCYWCAGVWCAILIGLGYLFL), and 89-111 (IPLIFILAIAGAQAILETAVGVG).

The protein belongs to the UPF0713 family.

Its subcellular location is the cell membrane. In Bacillus subtilis (strain 168), this protein is UPF0713 protein YngL (yngL).